The primary structure comprises 180 residues: Major urinary protein 2 (180 aa).

Residues 1 to 18 form the signal peptide; it reads MKMLLLLCLGLTLVCVHA. A disulfide bridge links C82 with C175.

It belongs to the calycin superfamily. Lipocalin family. As to expression, abundant in the urine of adult male mice but absent from that of females.

The protein resides in the secreted. Functionally, binds pheromones that are released from drying urine of males. These pheromones affect the sexual behavior of females. The sequence is that of Major urinary protein 2 (Mup2) from Mus musculus (Mouse).